The primary structure comprises 860 residues: Alanine--tRNA ligase (860 aa).

The Zn(2+) site is built by H563, H567, C665, and H669.

The protein belongs to the class-II aminoacyl-tRNA synthetase family. Requires Zn(2+) as cofactor.

It localises to the cytoplasm. It carries out the reaction tRNA(Ala) + L-alanine + ATP = L-alanyl-tRNA(Ala) + AMP + diphosphate. Functionally, catalyzes the attachment of alanine to tRNA(Ala) in a two-step reaction: alanine is first activated by ATP to form Ala-AMP and then transferred to the acceptor end of tRNA(Ala). Also edits incorrectly charged Ser-tRNA(Ala) and Gly-tRNA(Ala) via its editing domain. The chain is Alanine--tRNA ligase from Vibrio cholerae serotype O1 (strain ATCC 39315 / El Tor Inaba N16961).